We begin with the raw amino-acid sequence, 101 residues long: Thyrotropin subunit beta (101 aa).

Disulfide bonds link C2-C88, C10-C66, C14-C68, and C71-C78. N6 carries an N-linked (GlcNAc...) asparagine glycan.

Belongs to the glycoprotein hormones subunit beta family. In terms of assembly, heterodimer of a common alpha chain and a unique beta chain which confers biological specificity to thyrotropin, lutropin, follitropin and gonadotropin.

It localises to the secreted. In terms of biological role, indispensable for the control of thyroid structure and metabolism. The chain is Thyrotropin subunit beta (TSHB) from Phodopus sungorus (Striped hairy-footed hamster).